Reading from the N-terminus, the 160-residue chain is Seed allergenic protein RA5 (160 aa).

The first 26 residues, 1–26 (MASNKVVFSVLLLAVVSVLAATATMA), serve as a signal peptide directing secretion. Disulfide bonds link C42-C92, C56-C80, C64-C124, C81-C140, and C94-C152.

The protein belongs to the protease inhibitor I6 (cereal trypsin/alpha-amylase inhibitor) family. Post-translationally, five disulfide bonds are present.

It is found in the secreted. In terms of biological role, seed storage protein. The protein is Seed allergenic protein RA5 (RA5) of Oryza sativa subsp. japonica (Rice).